Reading from the N-terminus, the 196-residue chain is uncharacterized protein (196 aa).

The protein belongs to the mimivirus R24/R907 family.

This is an uncharacterized protein from Acanthamoeba polyphaga (Amoeba).